Reading from the N-terminus, the 278-residue chain is Undecaprenyl-diphosphatase 2 (278 aa).

7 helical membrane-spanning segments follow: residues 1–21, 38–58, 85–105, 118–138, 191–211, 223–243, and 251–271; these read MSIIEAIIIGIVQGITEFLPI, FPGFGFEIFLHIASILAVILY, FMFAIYIIVATGITGVLGLLL, FIAGALIITGTFLIIIERFFV, SFLLSIPVILGTSVLAIGDLL, PLIISFIVTFFFSWLGIIWLI, and LIYFAFYCFALAIFVFFYFDH.

This sequence belongs to the UppP family.

Its subcellular location is the cell membrane. The catalysed reaction is di-trans,octa-cis-undecaprenyl diphosphate + H2O = di-trans,octa-cis-undecaprenyl phosphate + phosphate + H(+). Catalyzes the dephosphorylation of undecaprenyl diphosphate (UPP). Confers resistance to bacitracin. This Halalkalibacterium halodurans (strain ATCC BAA-125 / DSM 18197 / FERM 7344 / JCM 9153 / C-125) (Bacillus halodurans) protein is Undecaprenyl-diphosphatase 2.